The following is a 378-amino-acid chain: Serpin B6 (378 aa).

N-acetylmethionine is present on Met1. Residue Lys196 is modified to N6-acetyllysine.

It belongs to the serpin family. Ov-serpin subfamily. Forms a complex with the monomeric form of beta-tryptase. Brain.

It localises to the cytoplasm. Functionally, inhibitor of cathepsin G, kallikrein-8 and thrombin. May play an important role in the inner ear in the protection against leakage of lysosomal content during stress. May be involved in the regulation of serine proteinases present in the brain or extravasated from the blood. In Bos taurus (Bovine), this protein is Serpin B6 (SERPINB6).